The following is a 265-amino-acid chain: Ribosomal RNA small subunit methyltransferase A (265 aa).

Positions 13, 15, 40, 61, 85, and 103 each coordinate S-adenosyl-L-methionine.

Belongs to the class I-like SAM-binding methyltransferase superfamily. rRNA adenine N(6)-methyltransferase family. RsmA subfamily.

It is found in the cytoplasm. It carries out the reaction adenosine(1518)/adenosine(1519) in 16S rRNA + 4 S-adenosyl-L-methionine = N(6)-dimethyladenosine(1518)/N(6)-dimethyladenosine(1519) in 16S rRNA + 4 S-adenosyl-L-homocysteine + 4 H(+). In terms of biological role, specifically dimethylates two adjacent adenosines (A1518 and A1519) in the loop of a conserved hairpin near the 3'-end of 16S rRNA in the 30S particle. May play a critical role in biogenesis of 30S subunits. This Aromatoleum aromaticum (strain DSM 19018 / LMG 30748 / EbN1) (Azoarcus sp. (strain EbN1)) protein is Ribosomal RNA small subunit methyltransferase A.